A 195-amino-acid chain; its full sequence is FMN-dependent NADH:quinone oxidoreductase (195 aa).

FMN-binding positions include serine 10, 16 to 18 (SQS), 91 to 94 (MYNF), and 135 to 138 (TRGG).

This sequence belongs to the azoreductase type 1 family. In terms of assembly, homodimer. Requires FMN as cofactor.

It catalyses the reaction 2 a quinone + NADH + H(+) = 2 a 1,4-benzosemiquinone + NAD(+). It carries out the reaction N,N-dimethyl-1,4-phenylenediamine + anthranilate + 2 NAD(+) = 2-(4-dimethylaminophenyl)diazenylbenzoate + 2 NADH + 2 H(+). Its function is as follows. Quinone reductase that provides resistance to thiol-specific stress caused by electrophilic quinones. Functionally, also exhibits azoreductase activity. Catalyzes the reductive cleavage of the azo bond in aromatic azo compounds to the corresponding amines. The sequence is that of FMN-dependent NADH:quinone oxidoreductase from Vibrio vulnificus (strain YJ016).